The primary structure comprises 772 residues: Potassium transporter 24 (772 aa).

Residues 1 to 23 (MDVEGGGAAARRKGGWWWWREEA) lie on the Cytoplasmic side of the membrane. A helical transmembrane segment spans residues 24–44 (VLAYQSLGVVYGEVAAAPLYV). Residues 45 to 66 (YRSAFAGGDIEHSAGNEEIYGA) are Extracellular-facing. Residues 67–87 (LSLVFWTLTLVPLAKYVLLVL) form a helical membrane-spanning segment. Residues 88–150 (RADDAGEGGT…ALERHRVLQR (63 aa)) lie on the Cytoplasmic side of the membrane. A helical membrane pass occupies residues 151 to 171 (LLLLLALLGTCMVIGDGVLTP). The Extracellular segment spans residues 172–192 (AVSVFSAVSGLELSMDKDQHK). The helical transmembrane segment at 193–213 (YILLPITCVILVCLFALQHYG) threads the bilayer. Topologically, residues 214–216 (THR) are cytoplasmic. A helical transmembrane segment spans residues 217 to 237 (VGFLFAPIVCLWLLCISIIGV). Topologically, residues 238-265 (YNIIHWNPHVYQALSPYYMYKFLRKTQT) are extracellular. Residues 266-286 (GGWMSLGGILLCVTGSEAMYA) traverse the membrane as a helical segment. Residues 287 to 298 (DLGHFTQNSIKM) are Cytoplasmic-facing. The helical transmembrane segment at 299 to 319 (AFTLLVYPALVLAYMGQAAYI) threads the bilayer. Residues 320–344 (SRHHNFEDGSHIGFYVSVPEKIRWP) are Extracellular-facing. The helical transmembrane segment at 345–365 (VLGIAILASVVGSQAIITGTF) threads the bilayer. Over 366 to 392 (SIIKQCSSLNCFPRVKIVHTSSTVHGQ) the chain is Cytoplasmic. The helical transmembrane segment at 393–413 (IYIPEINWILMILCLSVTIGF) threads the bilayer. The Extracellular segment spans residues 414 to 423 (RDTKHLTNAQ). Residues 424 to 444 (GLAVITVMLVTTCLMSLVILL) traverse the membrane as a helical segment. At 445-449 (CWNKS) the chain is on the cytoplasmic side. A helical membrane pass occupies residues 450–470 (IVYALSFLLFFGAIEVIYFAA). The Extracellular portion of the chain corresponds to 471 to 477 (SLVKFHE). The helical transmembrane segment at 478 to 498 (GAWVPVTLSFIFMMVMCVWHY) threads the bilayer. Residues 499 to 772 (GTKKKYEFDV…TVEVGMICLV (274 aa)) are Cytoplasmic-facing. Residues 656 to 684 (EEGEFDGSDSTGSSAHKEINPNTTAPKPK) are disordered.

This sequence belongs to the HAK/KUP transporter (TC 2.A.72.3) family.

Its subcellular location is the membrane. Functionally, high-affinity potassium transporter. In Oryza sativa subsp. japonica (Rice), this protein is Potassium transporter 24 (HAK24).